The sequence spans 356 residues: Histidinol-phosphate aminotransferase (356 aa).

Lys-208 carries the post-translational modification N6-(pyridoxal phosphate)lysine.

The protein belongs to the class-II pyridoxal-phosphate-dependent aminotransferase family. Histidinol-phosphate aminotransferase subfamily. As to quaternary structure, homodimer. Pyridoxal 5'-phosphate serves as cofactor.

The catalysed reaction is L-histidinol phosphate + 2-oxoglutarate = 3-(imidazol-4-yl)-2-oxopropyl phosphate + L-glutamate. It participates in amino-acid biosynthesis; L-histidine biosynthesis; L-histidine from 5-phospho-alpha-D-ribose 1-diphosphate: step 7/9. The sequence is that of Histidinol-phosphate aminotransferase from Lactococcus lactis subsp. cremoris (strain SK11).